We begin with the raw amino-acid sequence, 405 residues long: Arginine biosynthesis bifunctional protein ArgJ (405 aa).

Residues threonine 152, lysine 178, threonine 189, glutamate 276, asparagine 400, and serine 405 each contribute to the substrate site. Residue threonine 189 is the Nucleophile of the active site.

Belongs to the ArgJ family. Heterotetramer of two alpha and two beta chains.

It is found in the cytoplasm. It carries out the reaction N(2)-acetyl-L-ornithine + L-glutamate = N-acetyl-L-glutamate + L-ornithine. It catalyses the reaction L-glutamate + acetyl-CoA = N-acetyl-L-glutamate + CoA + H(+). It participates in amino-acid biosynthesis; L-arginine biosynthesis; L-ornithine and N-acetyl-L-glutamate from L-glutamate and N(2)-acetyl-L-ornithine (cyclic): step 1/1. The protein operates within amino-acid biosynthesis; L-arginine biosynthesis; N(2)-acetyl-L-ornithine from L-glutamate: step 1/4. Its function is as follows. Catalyzes two activities which are involved in the cyclic version of arginine biosynthesis: the synthesis of N-acetylglutamate from glutamate and acetyl-CoA as the acetyl donor, and of ornithine by transacetylation between N(2)-acetylornithine and glutamate. The protein is Arginine biosynthesis bifunctional protein ArgJ of Chromobacterium violaceum (strain ATCC 12472 / DSM 30191 / JCM 1249 / CCUG 213 / NBRC 12614 / NCIMB 9131 / NCTC 9757 / MK).